The chain runs to 288 residues: N-acetylneuraminate lyase (288 aa).

Residues Ser-44 and Thr-45 each coordinate aceneuramate. Tyr-133 serves as the catalytic Proton donor. The active-site Schiff-base intermediate with substrate is Lys-161. The aceneuramate site is built by Thr-163, Gly-185, Asp-187, Glu-188, and Ser-204.

This sequence belongs to the DapA family. NanA subfamily. As to quaternary structure, homotetramer.

The protein resides in the cytoplasm. It catalyses the reaction aceneuramate = aldehydo-N-acetyl-D-mannosamine + pyruvate. Its pathway is amino-sugar metabolism; N-acetylneuraminate degradation; D-fructose 6-phosphate from N-acetylneuraminate: step 1/5. Catalyzes the reversible aldol cleavage of N-acetylneuraminic acid (sialic acid; Neu5Ac) to form pyruvate and N-acetylmannosamine (ManNAc) via a Schiff base intermediate. This Clostridium perfringens (strain ATCC 13124 / DSM 756 / JCM 1290 / NCIMB 6125 / NCTC 8237 / Type A) protein is N-acetylneuraminate lyase.